The following is an 87-amino-acid chain: Olfactory receptor-like protein HbT2 (87 aa).

Residues 1–8 (KLWRMTGT) lie on the Cytoplasmic side of the membrane. Residues 9-29 (WLGGFCHSIIQIPVIIQLPFC) traverse the membrane as a helical segment. Residues 30-55 (GPNVIDHYFRDLQPLFKLACTDTFME) lie on the Extracellular side of the membrane. The chain crosses the membrane as a helical span at residues 56 to 76 (GVIVLAFSGLFSVFSFLILVS). At 77 to 87 (SYIVILVNLRN) the chain is on the cytoplasmic side.

The protein belongs to the G-protein coupled receptor 1 family.

It localises to the cell membrane. In terms of biological role, odorant receptor. The chain is Olfactory receptor-like protein HbT2 from Apis mellifera ligustica (Common honeybee).